The sequence spans 490 residues: Keratin, type II cytoskeletal 8 (490 aa).

Polar residues predominate over residues 1–27 (MSIRVTQKSYKMSTSGPRAFSSRSFTS). The disordered stretch occupies residues 1–48 (MSIRVTQKSYKMSTSGPRAFSSRSFTSGPGARISSSSFSRVGSSSSSF). The segment at 1-96 (MSIRVTQKSY…DPNIQAVRTQ (96 aa)) is head. Phosphoserine; by PKC/PRKCE is present on Ser-9. Lys-11 is covalently cross-linked (Glycyl lysine isopeptide (Lys-Gly) (interchain with G-Cter in SUMO2)). Ser-13, Ser-15, Ser-21, and Ser-22 each carry phosphoserine. Omega-N-methylarginine is present on Arg-23. Ser-24 carries the post-translational modification Phosphoserine; by PKC/PRKCE. A Phosphothreonine modification is found at Thr-26. Ser-27 carries the post-translational modification Phosphoserine. At Arg-32 the chain carries Omega-N-methylarginine. Ser-34, Ser-37, and Ser-39 each carry phosphoserine. A compositionally biased stretch (low complexity) spans 34–48 (SSSSFSRVGSSSSSF). Arg-40 is subject to Omega-N-methylarginine. Phosphoserine is present on residues Ser-43, Ser-44, and Ser-47. Position 49 is an asymmetric dimethylarginine; alternate (Arg-49). Arg-49 is modified (omega-N-methylarginine; alternate). Ser-51 is subject to Phosphoserine. Position 80 is a phosphoserine; by MAPK (Ser-80). Residues 97–132 (EKEQIKSLNNKFASFIDKVRFLEQQNKMLETKWSLL) are coil 1A. Residues 97 to 408 (EKEQIKSLNN…KLLEGEESRL (312 aa)) form the IF rod domain. The residue at position 107 (Lys-107) is an N6-malonyllysine. Glycyl lysine isopeptide (Lys-Gly) (interchain with G-Cter in SUMO2) cross-links involve residues Lys-128 and Lys-136. Residues 133–149 (QQQKTSRSNMDNMFESY) form a linker 1 region. The tract at residues 150–241 (INNLRRQLEA…QIHEEEIREL (92 aa)) is coil 1B. Lys-203 is covalently cross-linked (Glycyl lysine isopeptide (Lys-Gly) (interchain with G-Cter in SUMO1); alternate). Lys-203 is covalently cross-linked (Glycyl lysine isopeptide (Lys-Gly) (interchain with G-Cter in SUMO2); alternate). Lys-213 carries the post-translational modification N6-acetyllysine. Positions 242–265 (QSQISDTSVVLSMDNSRSLDMDGI) are linker 12. A phosphoserine mark is found at Ser-259 and Ser-280. The coil 2 stretch occupies residues 266–403 (IAEVRAQYED…ITTYRKLLEG (138 aa)). The segment at 267-387 (AEVRAQYEDI…REYQELMNVK (121 aa)) is necessary for interaction with PNN. A Glycyl lysine isopeptide (Lys-Gly) (interchain with G-Cter in SUMO2) cross-link involves residue Lys-291. A Glycyl lysine isopeptide (Lys-Gly) (interchain with G-Cter in SUMO2); alternate cross-link involves residue Lys-301. Lys-301 carries the N6-acetyllysine; alternate modification. Lys-310 is covalently cross-linked (Glycyl lysine isopeptide (Lys-Gly) (interchain with G-Cter in SUMO2)). A Glycyl lysine isopeptide (Lys-Gly) (interchain with G-Cter in SUMO2); alternate cross-link involves residue Lys-331. Lys-331 carries the post-translational modification N6-acetyllysine; alternate. Residue Ser-336 is modified to Phosphoserine. Residue Lys-399 forms a Glycyl lysine isopeptide (Lys-Gly) (interchain with G-Cter in SUMO2) linkage. A tail region spans residues 404 to 490 (EESRLESGMQ…VSESSDVVSK (87 aa)). Phosphoserine is present on residues Ser-406, Ser-410, Ser-416, Ser-423, Ser-430, Ser-432, and Ser-438. Lys-479 participates in a covalent cross-link: Glycyl lysine isopeptide (Lys-Gly) (interchain with G-Cter in SUMO1); alternate. Lys-479 participates in a covalent cross-link: Glycyl lysine isopeptide (Lys-Gly) (interchain with G-Cter in SUMO2); alternate. Phosphoserine is present on residues Ser-482, Ser-484, Ser-485, and Ser-489.

This sequence belongs to the intermediate filament family. Heterotetramer of two type I and two type II keratins. Forms a heterodimer with KRT18. Associates with KRT20. Interacts with PLEC isoform 1C, when in a heterodimer with KRT18. Interacts with PNN. When associated with KRT19, interacts with DMD. Interacts with TCHP. Interacts with APEX1. Interacts with GPER1. Interacts with EPPK1. Interacts with PKP1 and PKP2. Post-translationally, phosphorylation on serine residues is enhanced during EGF stimulation and mitosis. Ser-80 phosphorylation plays an important role in keratin filament reorganization. O-glycosylated. O-GlcNAcylation at multiple sites increases solubility, and decreases stability by inducing proteasomal degradation. In terms of processing, O-glycosylated (O-GlcNAcylated), in a cell cycle-dependent manner. In terms of tissue distribution, expressed in abundance in the epithelia of colon, bladder, ileum, and stomach, with lower expression observed in earskin (at protein level). Also expressed in pancreas, liver, dudenum and jejunum.

The protein localises to the cytoplasm. Its subcellular location is the nucleus. The protein resides in the nucleoplasm. It localises to the nucleus matrix. Functionally, together with KRT19, helps to link the contractile apparatus to dystrophin at the costameres of striated muscle. This Mus musculus (Mouse) protein is Keratin, type II cytoskeletal 8 (Krt8).